Here is a 326-residue protein sequence, read N- to C-terminus: MTERYADKQIKLFSLTSNLPIAEKIAKAAGIPLGKMSSRQFSDGEIMINIEETVRGDDIYIIQSTSFPVNDNLWELLIMIDACKRASANTVNIVLPYFGYSRQDRVAKPREPITAKLVANMLTKAGIDRVVTLDLHAVQVQGFFDIPVDNLFTVPLFAERYSKLGLSGSDVVVVSPKNSGIKRARSLAEYLDSPIAIIDYAQDDSEREQGYIIGDVSGKKAILIDDILNTGKTFAEAAKILERSGATDTYAVASHGLFAGGAAEVLETAPIKEIIVTDSVKTKNRVPENVTYLSASDLIAEAIIRIHERRPLSPLFSYQPKGKNNA.

ATP contacts are provided by residues 43–45 (DGE) and 102–103 (RQ). Mg(2+) is bound at residue His136. D-ribose 5-phosphate contacts are provided by residues Asp225 and 229–233 (NTGKT).

Homohexamer. It depends on Mg(2+) as a cofactor.

The protein resides in the cytoplasm. It catalyses the reaction D-ribose 5-phosphate + ATP = 5-phospho-alpha-D-ribose 1-diphosphate + AMP + H(+). The protein operates within metabolic intermediate biosynthesis; 5-phospho-alpha-D-ribose 1-diphosphate biosynthesis; 5-phospho-alpha-D-ribose 1-diphosphate from D-ribose 5-phosphate (route I): step 1/1. Involved in the biosynthesis of the central metabolite phospho-alpha-D-ribosyl-1-pyrophosphate (PRPP) via the transfer of pyrophosphoryl group from ATP to 1-hydroxyl of ribose-5-phosphate (Rib-5-P). This chain is Putative ribose-phosphate pyrophosphokinase 2, found in Streptococcus pyogenes serotype M6 (strain ATCC BAA-946 / MGAS10394).